Here is a 364-residue protein sequence, read N- to C-terminus: DNA primase large subunit PriL (364 aa).

Positions 237, 309, 318, and 325 each coordinate [4Fe-4S] cluster. Positions 345 to 364 (MQNDNEKGHEEKKEGETPPQ) are disordered.

This sequence belongs to the eukaryotic-type primase large subunit family. In terms of assembly, heterodimer of a small subunit (PriS) and a large subunit (PriL). [4Fe-4S] cluster serves as cofactor.

Functionally, regulatory subunit of DNA primase, an RNA polymerase that catalyzes the synthesis of short RNA molecules used as primers for DNA polymerase during DNA replication. Stabilizes and modulates the activity of the small subunit, increasing the rate of DNA synthesis, and conferring RNA synthesis capability. The DNA polymerase activity may enable DNA primase to also catalyze primer extension after primer synthesis. May also play a role in DNA repair. The chain is DNA primase large subunit PriL from Methanococcoides burtonii (strain DSM 6242 / NBRC 107633 / OCM 468 / ACE-M).